We begin with the raw amino-acid sequence, 556 residues long: Membrane protein insertase YidC (556 aa).

A helical membrane pass occupies residues 5–25 (TLTAIVLSFVLLTAFQFYMAW). Positions 36-74 (QVQSGESSAPAPLASTAPVADALPPPVEGMAGSAPQQAM) are disordered. Residues 42–55 (SSAPAPLASTAPVA) show a composition bias toward low complexity. The next 4 membrane-spanning stretches (helical) occupy residues 370 to 390 (NYGV…FPLA), 441 to 461 (LPIL…FLSV), 468 to 488 (FMLW…PLLM), and 510 to 530 (IMMF…SGLV).

This sequence belongs to the OXA1/ALB3/YidC family. Type 1 subfamily. Interacts with the Sec translocase complex via SecD. Specifically interacts with transmembrane segments of nascent integral membrane proteins during membrane integration.

It localises to the cell inner membrane. Its function is as follows. Required for the insertion and/or proper folding and/or complex formation of integral membrane proteins into the membrane. Involved in integration of membrane proteins that insert both dependently and independently of the Sec translocase complex, as well as at least some lipoproteins. Aids folding of multispanning membrane proteins. In Magnetococcus marinus (strain ATCC BAA-1437 / JCM 17883 / MC-1), this protein is Membrane protein insertase YidC.